The chain runs to 193 residues: HMG-Y-related protein A (193 aa).

An H15 domain is found at 11-81 (PIPPYPEMIL…LKNNYFRAGA (71 aa)). A disordered region spans residues 75–193 (NYFRAGAPDA…PAVPSETAAA (119 aa)). Positions 86–92 (PKRGRGR) match the Nuclear localization signal 1 (NLS) motif. 4 DNA-binding regions (a.T hook) span residues 87–98 (KRGRGRPPKARD), 113–124 (GRGRGRPPKAKS), 138–149 (PKPRGRPPKKAK), and 173–184 (KRGRGRPPKVRP). Residues 145 to 149 (PKKAK) carry the Nuclear localization signal 2 (NLS) motif.

This sequence belongs to the histone H1/H5 family. Post-translationally, phosphorylated by CDK, this phosphorylation prevents DNA-binding. Motility is increased when hypophosphorylated. Acetylated.

The protein resides in the nucleus. Its subcellular location is the nucleolus. Functionally, binds A/T-rich DNA (e.g. present in the storage gamma-zein gene promoter) with a highly dynamic distribution into the nucleus. Probably involved in endosperm development, during cells shift from a mitotic cycle to endoreduplication leading to massive synthesis of storage proteins (zeins) and starch. This is HMG-Y-related protein A from Zea mays (Maize).